Here is a 321-residue protein sequence, read N- to C-terminus: Glucokinase (321 aa).

ATP is bound at residue 8–13 (GDVGGT).

Belongs to the bacterial glucokinase family.

It is found in the cytoplasm. The enzyme catalyses D-glucose + ATP = D-glucose 6-phosphate + ADP + H(+). Functionally, not highly important in E.coli as glucose is transported into the cell by the PTS system already as glucose 6-phosphate. The protein is Glucokinase of Escherichia coli O139:H28 (strain E24377A / ETEC).